Reading from the N-terminus, the 2431-residue chain is Histone-lysine N-methyltransferase trr (2431 aa).

Disordered stretches follow at residues 34–78, 135–201, 213–235, and 759–789; these read LQKR…STAP, DADK…ENSG, ASGADSSTSVGNSTGTGTPAGTP, and QSANQIQMATSTSTASNPSTPNPTVNATPMN. The span at 142–165 shows a compositional bias: polar residues; the sequence is YRISTPRNSQSNPLLHRNTAFTSF. Low complexity-rich tracts occupy residues 171–183, 218–235, and 767–787; these read ASSSASSSSSTAS, SSTSVGNSTGTGTPAGTP, and ATSTSTASNPSTPNPTVNATP. Positions 801 to 805 match the LXXLL motif 1 motif; it reads LKQLL. Disordered regions lie at residues 863 to 895, 918 to 973, 1226 to 1292, 1404 to 1433, and 1478 to 1500; these read PVPTATQAAGSSSSSGSVATSTTTTTVASGGSS, VGGE…QVKQ, HPQQ…AGGA, TSGGGSPASMSSAASAGSSSAGGGKLKGGS, and GLVGGSARTRSPSPAESPGAEKM. Low complexity-rich tracts occupy residues 866-895, 952-970, and 1226-1241; these read TATQAAGSSSSSGSVATSTTTTTVASGGSS, QQQQQQLHQPQQLQPSPHQ, and HPQQQQQQLHQNQPQN. Over residues 1269–1281 the composition is skewed to basic residues; it reads RKRRKREVQKPRR. Over residues 1410–1422 the composition is skewed to low complexity; it reads PASMSSAASAGSS. A compositionally biased stretch (gly residues) spans 1423-1433; that stretch reads SAGGGKLKGGS. Residue threonine 1486 is modified to Phosphothreonine. 2 positions are modified to phosphoserine: serine 1488 and serine 1490. An LXXLL motif 2 motif is present at residues 1652–1656; sequence LANLL. Residues 1790-1836 form a disordered region; it reads GGSAVKSSNGDSPGSFCASSTAPAEMVVKQEPEDEDEKTPSVPGNPT. Over residues 1794 to 1811 the composition is skewed to polar residues; sequence VKSSNGDSPGSFCASSTA. A C2HC pre-PHD-type zinc finger spans residues 1895–1935; sequence TRQCVFCNQRGDGQADGPSRLLNFDVDKWVHLNCALWSNGV. The PHD-type zinc-finger motif lies at 1956-2003; it reads QACSACHQPGATIKCFKSRCNSLYHLPCAIREECVFYKNKSVHCSVHG. Residues 2060–2064 carry the LXXLL motif 3 motif; sequence LSNLL. The FYR N-terminal domain occupies 2061–2121; sequence SNLLRVGNMT…CRYICSIAEA (61 aa). Residues 2122 to 2209 form the FYR C-terminal domain; it reads GCKPEFRIQV…ETLTDYRFKY (88 aa). An SET domain is found at 2291-2407; the sequence is NNVYLARSKI…RGEELSYDYK (117 aa). The 17-residue stretch at 2415 to 2431 folds into the Post-SET domain; that stretch reads HKIPCACGAPNCRKWMN.

The protein belongs to the class V-like SAM-binding methyltransferase superfamily. Histone-lysine methyltransferase family. TRX/MLL subfamily. As to quaternary structure, component of the MLL3/4 complex composed at least of the catalytic subunit trr, ash2, Rbbp5, Dpy-30L1, wds, hcf, ptip, Pa1, Utx, Lpt and Ncoa6. Interacts with nuclear receptor EcR in an ecdysone-dependent manner. Interacts with ash2; the interaction stabilizes trr. In terms of tissue distribution, widely expressed.

Its subcellular location is the nucleus. It localises to the chromosome. It catalyses the reaction L-lysyl(4)-[histone H3] + 3 S-adenosyl-L-methionine = N(6),N(6),N(6)-trimethyl-L-lysyl(4)-[histone H3] + 3 S-adenosyl-L-homocysteine + 3 H(+). Its function is as follows. Histone methyltransferase that acts as a coactivator for the ecdysone receptor during development. Specifically trimethylates 'Lys-4' of histone H3, a specific tag for epigenetic transcriptional activation. Recruited by EcR in an ecdysone-dependent manner causing H3 'Lys-4' trimethylation at ecdysone-inducible promoters, leading to activate expression. Plays a central role in the developing compound eye, during the progression of the morphogenetic furrow and in post-furrow differentiation of the retinal epithelium, notably by activating expression of hh. Also required for wing and abdominal development. This Drosophila melanogaster (Fruit fly) protein is Histone-lysine N-methyltransferase trr (trr).